Reading from the N-terminus, the 198-residue chain is Ribonuclease HII (198 aa).

The region spanning 10–198 (HLVAGVDEVG…PVKRALGLVS (189 aa)) is the RNase H type-2 domain. A divalent metal cation is bound by residues aspartate 16, glutamate 17, and aspartate 108.

Belongs to the RNase HII family. Requires Mn(2+) as cofactor. Mg(2+) is required as a cofactor.

It localises to the cytoplasm. The catalysed reaction is Endonucleolytic cleavage to 5'-phosphomonoester.. Endonuclease that specifically degrades the RNA of RNA-DNA hybrids. The protein is Ribonuclease HII of Salmonella schwarzengrund (strain CVM19633).